The chain runs to 282 residues: Tryptophan 2,3-dioxygenase (282 aa).

Substrate is bound by residues Phe51 to His55, Tyr113, and Arg117. Residue His240 coordinates heme. Thr254 lines the substrate pocket.

Belongs to the tryptophan 2,3-dioxygenase family. As to quaternary structure, homotetramer. Heme serves as cofactor.

The catalysed reaction is L-tryptophan + O2 = N-formyl-L-kynurenine. The protein operates within amino-acid degradation; L-tryptophan degradation via kynurenine pathway; L-kynurenine from L-tryptophan: step 1/2. Its function is as follows. Heme-dependent dioxygenase that catalyzes the oxidative cleavage of the L-tryptophan (L-Trp) pyrrole ring and converts L-tryptophan to N-formyl-L-kynurenine. Catalyzes the oxidative cleavage of the indole moiety. The chain is Tryptophan 2,3-dioxygenase from Polaromonas naphthalenivorans (strain CJ2).